Here is a 134-residue protein sequence, read N- to C-terminus: Small ribosomal subunit protein bS6 (134 aa).

This sequence belongs to the bacterial ribosomal protein bS6 family.

Binds together with bS18 to 16S ribosomal RNA. The chain is Small ribosomal subunit protein bS6 from Pelodictyon phaeoclathratiforme (strain DSM 5477 / BU-1).